Here is a 103-residue protein sequence, read N- to C-terminus: Phospholipase A2 large subunit (103 aa).

Ca(2+) contacts are provided by Trp7, Gly9, and Gly11. 4 disulfide bridges follow: Cys8-Cys30, Cys29-Cys68, Cys36-Cys61, and Cys59-Cys96. Asn16 carries N-linked (GlcNAc...) asparagine glycosylation. His33 is a catalytic residue. A Ca(2+)-binding site is contributed by Asp34.

The protein belongs to the phospholipase A2 family. Group III subfamily. Heterodimer composed of a large subunit and a small subunit; disulfide-linked. Ca(2+) is required as a cofactor. Expressed by the venom gland.

It localises to the secreted. It carries out the reaction a 1,2-diacyl-sn-glycero-3-phosphocholine + H2O = a 1-acyl-sn-glycero-3-phosphocholine + a fatty acid + H(+). In terms of biological role, phospholipase toxin, which catalyzes the calcium-dependent hydrolysis of the 2-acyl groups in 3-sn-phosphoglycerides. Inhibits both skeletal (RYR1) and cardiac (RYR2) ryanodine receptors (calcium release channels). Probably blocks ryanodine receptors by generating a lipid product. In Chersonesometrus fulvipes (Indian black scorpion), this protein is Phospholipase A2 large subunit.